A 502-amino-acid chain; its full sequence is Bone morphogenetic protein receptor type-1B (502 aa).

The segment covering 1-10 (MPLLSSSKLS) has biased composition (polar residues). An N-terminal signal peptide occupies residues 1–13 (MPLLSSSKLSMES). The tract at residues 1 to 27 (MPLLSSSKLSMESRKEDSEGTAPAPPQ) is disordered. Over 14–126 (RKEDSEGTAP…DFAEGNIHHK (113 aa)) the chain is Extracellular. 5 disulfides stabilise this stretch: cysteine 32-cysteine 53, cysteine 34-cysteine 38, cysteine 47-cysteine 71, cysteine 81-cysteine 95, and cysteine 96-cysteine 102. N-linked (GlcNAc...) asparagine glycosylation is present at asparagine 44. Residues 127 to 148 (ALLISVTVCSILLVLIIIFCYF) form a helical membrane-spanning segment. At 149–502 (RYKRQEARPR…KMSESQDIKL (354 aa)) the chain is on the cytoplasmic side. One can recognise a GS domain in the interval 174–203 (ESLKDLIEQSQSSGSGSGLPLLVQRTIAKQ). The Protein kinase domain maps to 204–494 (IQMVKQIGKG…LRVKKTLAKM (291 aa)). ATP contacts are provided by residues 210 to 218 (IGKGRYGEV) and lysine 231. The Proton acceptor role is filled by aspartate 332.

Belongs to the protein kinase superfamily. TKL Ser/Thr protein kinase family. TGFB receptor subfamily. Mg(2+) is required as a cofactor. Requires Mn(2+) as cofactor. In terms of processing, autophosphorylated.

It is found in the cell membrane. It carries out the reaction L-threonyl-[receptor-protein] + ATP = O-phospho-L-threonyl-[receptor-protein] + ADP + H(+). The enzyme catalyses L-seryl-[receptor-protein] + ATP = O-phospho-L-seryl-[receptor-protein] + ADP + H(+). Its function is as follows. On ligand binding, forms a receptor complex consisting of two type II and two type I transmembrane serine/threonine kinases. Type II receptors phosphorylate and activate type I receptors which autophosphorylate, then bind and activate SMAD transcription. Positively regulates chondrocyte differentiation. The chain is Bone morphogenetic protein receptor type-1B (BMPR1B) from Gallus gallus (Chicken).